Reading from the N-terminus, the 236-residue chain is Ubiquinone biosynthesis O-methyltransferase (236 aa).

Positions 39, 59, 80, and 124 each coordinate S-adenosyl-L-methionine.

It belongs to the methyltransferase superfamily. UbiG/COQ3 family.

The enzyme catalyses a 3-demethylubiquinol + S-adenosyl-L-methionine = a ubiquinol + S-adenosyl-L-homocysteine + H(+). It catalyses the reaction a 3-(all-trans-polyprenyl)benzene-1,2-diol + S-adenosyl-L-methionine = a 2-methoxy-6-(all-trans-polyprenyl)phenol + S-adenosyl-L-homocysteine + H(+). It participates in cofactor biosynthesis; ubiquinone biosynthesis. Its function is as follows. O-methyltransferase that catalyzes the 2 O-methylation steps in the ubiquinone biosynthetic pathway. The polypeptide is Ubiquinone biosynthesis O-methyltransferase (Shewanella sp. (strain ANA-3)).